The sequence spans 377 residues: Metallo-hydrolase mfmC (377 aa).

Zn(2+) is bound by residues His126, His128, Asp130, His131, His209, and Asp233.

This sequence belongs to the metallo-beta-lactamase superfamily.

The protein operates within secondary metabolite biosynthesis; terpenoid biosynthesis. Its function is as follows. Metallo-hydrolase; part of the gene cluster that mediates the biosynthesis of the phthalide-terpenoid hybrid 11'-O-desmethylfendlerol. Within the pathway, mfma and mfmC act together to convert 3,5-dimethylorsellinic acid (DMOA) into the phthalide 5,7-dihydroxy-4-(hydroxymethyl)-6-methylphthalide. The biosynthesis of 11'-O-desmethylfendlerol begins with the NR-PKS mfmB that forms 3,5-dimethylorsellinic acid (DMOA), which is then transformed into the phthalide 5,7-dihydroxy-4-(hydroxymethyl)-6-methylphthalide by the cytochrome P450 monooxygenase mfmA and the hydrolase mfmC. Subsequently, the methyltransferase mfmE catalyzes 7-O-methylation to yield 5-hydroxy-4-(hydroxymethyl)-7-methoxy-6-methylphthalide, which undergoes C-3 hydroxylation by the cytochrome P450 monooxygenase mfmF. The resultant cyclopolic acid (2,5-dihydroxy-4-(hydroxymethyl)-7-methoxy-6-methylphthalide) is then farnesylated by the DMATS-type prenyltransferase mfmD to afford 5-O-farnesylcyclopolic acid. Finally, the Pyr4-family terpene cyclase mfmH cyclizes the farnesyl moiety of 5-O-farnesylcyclopolic acid into a drimane-like structure, thus completing the biosynthesis of 11'-O-desmethylfendlerol. The chain is Metallo-hydrolase mfmC from Annulohypoxylon moriforme (Filamentous fungus).